Reading from the N-terminus, the 270-residue chain is MAAVGRYSGKVVVVTGGSRGIGAAIVRAFVDSGAQVVFCDKDEAGGRAVEQELLGTVFIPGDVTQEGDLQTLISETVSRFGHLDCVVNNAGYHPPAQLPEETSAQGFRQLLEENLLGAYTLIKLALPHLRKSKGNIINISSLVGAIGQSQALTYVATKGAVTAMTKALALDESRYGVRVNCISPGNIWTPLWQELAAATSDPRATILEGTLAQPLGRMGQPAEVGAAAVFLASEATFCTGLELFMTGGAELGYGRKASSSTLVEVPILPP.

12 residues coordinate NAD(+): R19, I21, D40, K41, D62, V63, N89, Y154, K158, I187, T189, and L191.

It belongs to the short-chain dehydrogenases/reductases (SDR) family.

The catalysed reaction is L-fucose + NAD(+) = L-fucono-1,5-lactone + NADH + H(+). It catalyses the reaction D-arabinose + NAD(+) = D-arabinono-1,5-lactone + NADH + H(+). The enzyme catalyses L-galactose + NAD(+) = L-galactono-1,5-lactone + NADH + H(+). Catalyzes the NAD(+)-dependent oxidation of L-fucose, yielding L-fucono-1,5-lactone, which rapidly converts spontaneously to L-fucone-1,4-lactone. Does not use NADPH. Displays low activity on L-fucose, D-arabinose and L-galactose compared with rabbit and human. This is consitent with the low L-fucose metabolism observed in this species. This chain is L-fucose dehydrogenase (Hsd17b14), found in Rattus norvegicus (Rat).